Here is a 335-residue protein sequence, read N- to C-terminus: Fructose-1,6-bisphosphatase class 1 (335 aa).

Glutamate 91, aspartate 113, leucine 115, and aspartate 116 together coordinate Mg(2+). Residues 116–119 (DGSS), asparagine 208, and lysine 274 each bind substrate. Glutamate 280 lines the Mg(2+) pocket.

This sequence belongs to the FBPase class 1 family. Homotetramer. The cofactor is Mg(2+).

The protein resides in the cytoplasm. The catalysed reaction is beta-D-fructose 1,6-bisphosphate + H2O = beta-D-fructose 6-phosphate + phosphate. The protein operates within carbohydrate biosynthesis; gluconeogenesis. This chain is Fructose-1,6-bisphosphatase class 1, found in Chromobacterium violaceum (strain ATCC 12472 / DSM 30191 / JCM 1249 / CCUG 213 / NBRC 12614 / NCIMB 9131 / NCTC 9757 / MK).